Here is a 103-residue protein sequence, read N- to C-terminus: Protein translation factor SUI1 homolog (103 aa).

The protein belongs to the SUI1 family.

This Hyperthermus butylicus (strain DSM 5456 / JCM 9403 / PLM1-5) protein is Protein translation factor SUI1 homolog.